Here is a 199-residue protein sequence, read N- to C-terminus: Nucleoside triphosphate pyrophosphatase (199 aa).

The active-site Proton acceptor is D76.

Belongs to the Maf family. It depends on a divalent metal cation as a cofactor.

The protein localises to the cytoplasm. It carries out the reaction a ribonucleoside 5'-triphosphate + H2O = a ribonucleoside 5'-phosphate + diphosphate + H(+). The catalysed reaction is a 2'-deoxyribonucleoside 5'-triphosphate + H2O = a 2'-deoxyribonucleoside 5'-phosphate + diphosphate + H(+). Its function is as follows. Nucleoside triphosphate pyrophosphatase. May have a dual role in cell division arrest and in preventing the incorporation of modified nucleotides into cellular nucleic acids. The polypeptide is Nucleoside triphosphate pyrophosphatase (Caulobacter vibrioides (strain ATCC 19089 / CIP 103742 / CB 15) (Caulobacter crescentus)).